Reading from the N-terminus, the 214-residue chain is Redox-sensing transcriptional repressor Rex (214 aa).

Residues 17–56 (LYYRIFKRFYADQVEKASSKQIADAMGIDSATVRRDFSYF) constitute a DNA-binding region (H-T-H motif). 91–96 (GCGNIG) contributes to the NAD(+) binding site.

It belongs to the transcriptional regulatory Rex family. Homodimer.

The protein resides in the cytoplasm. Its function is as follows. Modulates transcription in response to changes in cellular NADH/NAD(+) redox state. This chain is Redox-sensing transcriptional repressor Rex, found in Streptococcus equi subsp. zooepidemicus (strain H70).